The chain runs to 799 residues: Target of rapamycin complex 1 subunit TCO89 (799 aa).

The segment at 18-41 (NASTVSHQSKPFRQFSTRSRAKSN) is disordered. Threonine 52 and threonine 82 each carry phosphothreonine. Serine 84, serine 104, serine 107, serine 115, and serine 144 each carry phosphoserine. Polar residues predominate over residues 97–126 (NQGKRSASFHSPVHNTLLSPKNSSHSNTGT). Disordered stretches follow at residues 97–171 (NQGK…DNIE) and 201–284 (LQSP…ADID). The span at 147–156 (DAQESKKSES) shows a compositional bias: basic and acidic residues. Residues 157-170 (TTDEEVECFSEDNI) show a composition bias toward acidic residues. Serine 203 and serine 215 each carry phosphoserine. Residues 213–224 (DKSGTDGKENHR) are compositionally biased toward basic and acidic residues. Positions 233–243 (LSSNNYFGESS) are enriched in polar residues. A compositionally biased stretch (basic and acidic residues) spans 244–253 (HSIEHQKDGE). Positions 254–269 (TSPSSIETKLNATSVI) are enriched in polar residues. Serine 290 is modified (phosphoserine). The segment at 324–391 (AHKSNQKPSH…PDDISSAGTK (68 aa)) is disordered. Positions 332–346 (SHSDEQFDQEDHIDA) are enriched in basic and acidic residues. Residues 348–363 (RSNSSRKSDSSFMSLR) are compositionally biased toward low complexity. Serine 397 is subject to Phosphoserine. 2 disordered regions span residues 418–476 (FENS…QSTF) and 538–568 (NKNS…RQSN). Composition is skewed to polar residues over residues 420–429 (NSSSIQNSLG) and 461–476 (GRSQ…QSTF). The residue at position 575 (serine 575) is a Phosphoserine. Residues 663 to 685 (IRKKSHNDAQSIAHSSSDTDHKD) form a disordered region. Position 707 is a phosphoserine (serine 707).

The protein belongs to the TORC subunit TCO89 family. The target of rapamycin complex 1 (TORC1) is composed of at least KOG1, LST8, TCO89 and either TOR1 (TORC1-A) or TOR2 (TORC1-B). Interacts with PIB2; following activation of PIB2 by glutamine or cysteine. TORC1 binds to and is inhibited by FKBP-rapamycin.

The protein localises to the cell membrane. It localises to the vacuole membrane. In terms of biological role, component of TORC1, which regulates multiple cellular processes to control cell growth in response to environmental signals. Nutrient limitation and environmental stress signals cause inactivation of TORC1. Active TORC1 positively controls ribosome biogenesis via control of rRNA, ribosomal protein and tRNA gene expression, and rRNA processing. TORC1 positively controls protein biosynthesis by regulation of mRNA stability, translation initiation factor activity, and high-affinity amino acid permeases that serve to provide amino acids for use by the translation machinery. TORC1 also promotes growth by sequestering a number of nutrient and general stress-responsive transcription factors in the cytoplasm. TORC1 negatively controls macroautophagy, a process to recycle surplus cytoplasmic mass under nutrient starvation conditions. In Saccharomyces cerevisiae (strain ATCC 204508 / S288c) (Baker's yeast), this protein is Target of rapamycin complex 1 subunit TCO89 (TCO89).